Reading from the N-terminus, the 211-residue chain is Molybdenum cofactor guanylyltransferase (211 aa).

GTP contacts are provided by residues 12 to 14 (LAG), K25, N53, D71, and D101. Residue D101 participates in Mg(2+) binding.

Belongs to the MobA family. In terms of assembly, monomer. The cofactor is Mg(2+).

The protein localises to the cytoplasm. The catalysed reaction is Mo-molybdopterin + GTP + H(+) = Mo-molybdopterin guanine dinucleotide + diphosphate. Transfers a GMP moiety from GTP to Mo-molybdopterin (Mo-MPT) cofactor (Moco or molybdenum cofactor) to form Mo-molybdopterin guanine dinucleotide (Mo-MGD) cofactor. The sequence is that of Molybdenum cofactor guanylyltransferase from Acidovorax sp. (strain JS42).